The following is a 428-amino-acid chain: D-inositol 3-phosphate glycosyltransferase (428 aa).

His-17 provides a ligand contact to 1D-myo-inositol 3-phosphate. UDP-N-acetyl-alpha-D-glucosamine-binding positions include 23 to 24 (QP) and Gly-31. 1D-myo-inositol 3-phosphate-binding positions include 28–33 (DAGGMN), Arg-86, Tyr-119, Thr-143, and Arg-163. UDP-N-acetyl-alpha-D-glucosamine contacts are provided by Arg-237 and Lys-242. Positions 312, 313, and 315 each coordinate Mg(2+). UDP-N-acetyl-alpha-D-glucosamine contacts are provided by Glu-325 and Glu-333. Residue Thr-339 participates in Mg(2+) binding.

Belongs to the glycosyltransferase group 1 family. MshA subfamily. In terms of assembly, homodimer.

It catalyses the reaction 1D-myo-inositol 3-phosphate + UDP-N-acetyl-alpha-D-glucosamine = 1D-myo-inositol 2-acetamido-2-deoxy-alpha-D-glucopyranoside 3-phosphate + UDP + H(+). Functionally, catalyzes the transfer of a N-acetyl-glucosamine moiety to 1D-myo-inositol 3-phosphate to produce 1D-myo-inositol 2-acetamido-2-deoxy-glucopyranoside 3-phosphate in the mycothiol biosynthesis pathway. The chain is D-inositol 3-phosphate glycosyltransferase from Thermobispora bispora (strain ATCC 19993 / DSM 43833 / CBS 139.67 / JCM 10125 / KCTC 9307 / NBRC 14880 / R51).